A 351-amino-acid chain; its full sequence is N-acetyl-gamma-glutamyl-phosphate reductase (351 aa).

The active site involves Cys-150.

It belongs to the NAGSA dehydrogenase family. Type 1 subfamily.

Its subcellular location is the cytoplasm. It catalyses the reaction N-acetyl-L-glutamate 5-semialdehyde + phosphate + NADP(+) = N-acetyl-L-glutamyl 5-phosphate + NADPH + H(+). Its pathway is amino-acid biosynthesis; L-arginine biosynthesis; N(2)-acetyl-L-ornithine from L-glutamate: step 3/4. In terms of biological role, catalyzes the NADPH-dependent reduction of N-acetyl-5-glutamyl phosphate to yield N-acetyl-L-glutamate 5-semialdehyde. The protein is N-acetyl-gamma-glutamyl-phosphate reductase of Heliobacterium modesticaldum (strain ATCC 51547 / Ice1).